We begin with the raw amino-acid sequence, 387 residues long: Cytochrome b (387 aa).

The chain crosses the membrane as a helical span at residues L32–M52. The heme b site is built by H82 and H96. The next 8 membrane-spanning stretches (helical) occupy residues G85 to S105, I116 to Y136, L151 to V171, F179 to M199, F225 to F245, L289 to D309, L324 to V344, and Q350 to I370. Heme b is bound by residues H183 and H197.

Belongs to the cytochrome b family. Component of the ubiquinol-cytochrome c oxidoreductase (cytochrome b-c1 complex, complex III, CIII), a multisubunit enzyme composed of 10 subunits. The complex is composed of 3 respiratory subunits cytochrome b (COB), cytochrome c1 (CYT1) and Rieske protein (RIP1), 2 core protein subunits COR1 and QCR2, and 5 low-molecular weight protein subunits QCR6, QCR7, QCR8, QCR9 and QCR10. The complex exists as an obligatory dimer and forms supercomplexes (SCs) in the inner mitochondrial membrane with a monomer or a dimer of cytochrome c oxidase (complex IV, CIV), resulting in 2 different assemblies (supercomplexes III(2)IV and III(2)IV(2)). Heme b serves as cofactor.

The protein localises to the mitochondrion inner membrane. Functionally, component of the ubiquinol-cytochrome c oxidoreductase, a multisubunit transmembrane complex that is part of the mitochondrial electron transport chain which drives oxidative phosphorylation. The complex plays an important role in the uptake of multiple carbon sources present in different host niches. In Candida albicans (strain SC5314 / ATCC MYA-2876) (Yeast), this protein is Cytochrome b.